The primary structure comprises 448 residues: Serine--tRNA ligase (448 aa).

An L-serine-binding site is contributed by 255–257 (TSE). 286 to 288 (RSE) serves as a coordination point for ATP. Glu-309 serves as a coordination point for L-serine. Position 373–376 (373–376 (EISS)) interacts with ATP. Ser-408 provides a ligand contact to L-serine.

The protein belongs to the class-II aminoacyl-tRNA synthetase family. Type-1 seryl-tRNA synthetase subfamily. Homodimer. The tRNA molecule binds across the dimer.

The protein localises to the cytoplasm. It carries out the reaction tRNA(Ser) + L-serine + ATP = L-seryl-tRNA(Ser) + AMP + diphosphate + H(+). The enzyme catalyses tRNA(Sec) + L-serine + ATP = L-seryl-tRNA(Sec) + AMP + diphosphate + H(+). The protein operates within aminoacyl-tRNA biosynthesis; selenocysteinyl-tRNA(Sec) biosynthesis; L-seryl-tRNA(Sec) from L-serine and tRNA(Sec): step 1/1. In terms of biological role, catalyzes the attachment of serine to tRNA(Ser). Is also able to aminoacylate tRNA(Sec) with serine, to form the misacylated tRNA L-seryl-tRNA(Sec), which will be further converted into selenocysteinyl-tRNA(Sec). The protein is Serine--tRNA ligase of Bordetella petrii (strain ATCC BAA-461 / DSM 12804 / CCUG 43448).